Consider the following 475-residue polypeptide: Siroheme synthase (475 aa).

A precorrin-2 dehydrogenase /sirohydrochlorin ferrochelatase region spans residues 1-204; it reads MDYLPVFLNI…GRDQAAQDYL (204 aa). Residues 22-23 and 43-44 contribute to the NAD(+) site; these read EI and PA. Residue serine 129 is modified to Phosphoserine. A uroporphyrinogen-III C-methyltransferase region spans residues 218–475; sequence GEVYLVGAGP…MGTSSGPGYP (258 aa). Proline 227 contributes to the S-adenosyl-L-methionine binding site. Aspartate 250 acts as the Proton acceptor in catalysis. The active-site Proton donor is lysine 272. S-adenosyl-L-methionine is bound by residues 303–305, isoleucine 308, 333–334, methionine 385, and glycine 414; these read GGD and TA.

The protein in the N-terminal section; belongs to the precorrin-2 dehydrogenase / sirohydrochlorin ferrochelatase family. This sequence in the C-terminal section; belongs to the precorrin methyltransferase family.

It carries out the reaction uroporphyrinogen III + 2 S-adenosyl-L-methionine = precorrin-2 + 2 S-adenosyl-L-homocysteine + H(+). The enzyme catalyses precorrin-2 + NAD(+) = sirohydrochlorin + NADH + 2 H(+). It catalyses the reaction siroheme + 2 H(+) = sirohydrochlorin + Fe(2+). The protein operates within cofactor biosynthesis; adenosylcobalamin biosynthesis; precorrin-2 from uroporphyrinogen III: step 1/1. It functions in the pathway cofactor biosynthesis; adenosylcobalamin biosynthesis; sirohydrochlorin from precorrin-2: step 1/1. It participates in porphyrin-containing compound metabolism; siroheme biosynthesis; precorrin-2 from uroporphyrinogen III: step 1/1. Its pathway is porphyrin-containing compound metabolism; siroheme biosynthesis; siroheme from sirohydrochlorin: step 1/1. The protein operates within porphyrin-containing compound metabolism; siroheme biosynthesis; sirohydrochlorin from precorrin-2: step 1/1. In terms of biological role, multifunctional enzyme that catalyzes the SAM-dependent methylations of uroporphyrinogen III at position C-2 and C-7 to form precorrin-2 via precorrin-1. Then it catalyzes the NAD-dependent ring dehydrogenation of precorrin-2 to yield sirohydrochlorin. Finally, it catalyzes the ferrochelation of sirohydrochlorin to yield siroheme. The chain is Siroheme synthase from Nitrosomonas europaea (strain ATCC 19718 / CIP 103999 / KCTC 2705 / NBRC 14298).